Consider the following 146-residue polypeptide: Universal stress protein MT1672 (146 aa).

This sequence belongs to the universal stress protein A family.

The chain is Universal stress protein MT1672 from Mycobacterium tuberculosis (strain CDC 1551 / Oshkosh).